Here is a 144-residue protein sequence, read N- to C-terminus: Small ribosomal subunit protein eS19 (144 aa).

It belongs to the eukaryotic ribosomal protein eS19 family.

This is Small ribosomal subunit protein eS19 (RPS19) from Argopecten irradians (Bay scallop).